The following is a 334-amino-acid chain: Peroxidase 65 (334 aa).

An N-terminal signal peptide occupies residues 1–28 (MSNMQFSRGFNPFVILFCLAVVAPIISA). Disulfide bonds link Cys-42-Cys-123, Cys-75-Cys-80, Cys-129-Cys-326, and Cys-208-Cys-236. His-73 acts as the Proton acceptor in catalysis. The Ca(2+) site is built by Asp-74, Gly-79, Asp-81, and Ser-83. Pro-171 serves as a coordination point for substrate. N-linked (GlcNAc...) asparagine glycosylation occurs at Asn-174. Position 201 (His-201) interacts with heme b. Thr-202 contacts Ca(2+). Asn-238 carries an N-linked (GlcNAc...) asparagine glycan. Ca(2+) contacts are provided by Asp-250, Thr-253, and Asp-258. Residues Asn-282 and Asn-294 are each glycosylated (N-linked (GlcNAc...) asparagine).

This sequence belongs to the peroxidase family. Classical plant (class III) peroxidase subfamily. It depends on heme b as a cofactor. Ca(2+) serves as cofactor.

The protein resides in the secreted. It carries out the reaction 2 a phenolic donor + H2O2 = 2 a phenolic radical donor + 2 H2O. In terms of biological role, removal of H(2)O(2), oxidation of toxic reductants, biosynthesis and degradation of lignin, suberization, auxin catabolism, response to environmental stresses such as wounding, pathogen attack and oxidative stress. These functions might be dependent on each isozyme/isoform in each plant tissue. The polypeptide is Peroxidase 65 (PER65) (Arabidopsis thaliana (Mouse-ear cress)).